A 310-amino-acid polypeptide reads, in one-letter code: MARFSSKNLTKLFQYLVLSLLSPVAFGNFNIEVDTRNKVLNDAAINFYGQNIGIITDGERRVFGITDGPLKEACSKVQGGKPGYVWVRSPTPANLYEIHNWRQVLRVLTAYDARIVGIEQKPEMVATQTYKNRSDHPAKVSGMITQSVSNTIENKWIEMNQFSITATVSCKVKAAEIGLSMGYERSWGKEDTNSTTTMLGQQTGFEVELPPGGNCTAVLSATKGSMKIDVGYRATLEGDCAVDFPNTWNGHHYWCYPIGLVQDVGNLKKHIDCRELITIGYYSDAHVTIENLGKKKNKKTKKPPRKTKMN.

A signal peptide spans 1–27; it reads MARFSSKNLTKLFQYLVLSLLSPVAFG.

Belongs to the megalysin family. Contains 3 disulfide bonds. As to expression, expressed by the venom apparatus.

The protein resides in the secreted. It localises to the target cell membrane. Its function is as follows. May function as a large pore-forming protein. This chain is U-megalopygitoxin(8)-Mo15, found in Megalopyge opercularis (Southern flannel moth).